A 193-amino-acid polypeptide reads, in one-letter code: MLLSDRDIRKSIDSGDLGIDPFDPLLIQPSSIDVRMDRYFRVFNNSKYTHIDPKLNQDELTSLVEVADGDPFVLHPGEFVLAATLEKFTLPHHLAGRLEGKSSLGRLGLLTHSTAGFIDPGFSGHITLELSNVANLPITLWPGMKVGQLALFMMSSPAETPYGSGSLGSKYQGQRGPTPSKGYLNFSSEQDSD.

DCTP-binding positions include Lys101–Arg106, Asp119, Thr127–Glu129, Gln148, Tyr162, and Gln174. The Proton donor/acceptor role is filled by Glu129. Residues Thr160–Asp193 are disordered. A compositionally biased stretch (polar residues) spans Leu167–Pro177.

The protein belongs to the dCTP deaminase family. In terms of assembly, homotrimer.

It carries out the reaction dCTP + 2 H2O = dUMP + NH4(+) + diphosphate. It participates in pyrimidine metabolism; dUMP biosynthesis; dUMP from dCTP: step 1/1. Its function is as follows. Bifunctional enzyme that catalyzes both the deamination of dCTP to dUTP and the hydrolysis of dUTP to dUMP without releasing the toxic dUTP intermediate. The protein is dCTP deaminase, dUMP-forming of Corynebacterium efficiens (strain DSM 44549 / YS-314 / AJ 12310 / JCM 11189 / NBRC 100395).